We begin with the raw amino-acid sequence, 434 residues long: Serine hydroxymethyltransferase (434 aa).

(6S)-5,6,7,8-tetrahydrofolate-binding positions include leucine 132 and 136–138; that span reads GHL. N6-(pyridoxal phosphate)lysine is present on lysine 241.

Belongs to the SHMT family. Homodimer. The cofactor is pyridoxal 5'-phosphate.

It is found in the cytoplasm. It carries out the reaction (6R)-5,10-methylene-5,6,7,8-tetrahydrofolate + glycine + H2O = (6S)-5,6,7,8-tetrahydrofolate + L-serine. The protein operates within one-carbon metabolism; tetrahydrofolate interconversion. It functions in the pathway amino-acid biosynthesis; glycine biosynthesis; glycine from L-serine: step 1/1. In terms of biological role, catalyzes the reversible interconversion of serine and glycine with tetrahydrofolate (THF) serving as the one-carbon carrier. This reaction serves as the major source of one-carbon groups required for the biosynthesis of purines, thymidylate, methionine, and other important biomolecules. Also exhibits THF-independent aldolase activity toward beta-hydroxyamino acids, producing glycine and aldehydes, via a retro-aldol mechanism. This is Serine hydroxymethyltransferase from Nitrobacter hamburgensis (strain DSM 10229 / NCIMB 13809 / X14).